Here is a 505-residue protein sequence, read N- to C-terminus: ATP synthase subunit alpha (505 aa).

ATP is bound at residue 170–177 (GDRQTGKT).

It belongs to the ATPase alpha/beta chains family. F-type ATPases have 2 components, CF(1) - the catalytic core - and CF(0) - the membrane proton channel. CF(1) has five subunits: alpha(3), beta(3), gamma(1), delta(1), epsilon(1). CF(0) has four main subunits: a(1), b(1), b'(1) and c(9-12).

The protein resides in the cellular thylakoid membrane. It carries out the reaction ATP + H2O + 4 H(+)(in) = ADP + phosphate + 5 H(+)(out). Its function is as follows. Produces ATP from ADP in the presence of a proton gradient across the membrane. The alpha chain is a regulatory subunit. The polypeptide is ATP synthase subunit alpha (Prochlorococcus marinus (strain SARG / CCMP1375 / SS120)).